The following is a 197-amino-acid chain: Dephospho-CoA kinase (197 aa).

The DPCK domain maps to 2 to 197; it reads IIGITGGIAS…SALLSLANPR (196 aa). ATP is bound at residue 10 to 15; it reads ASGKST.

It belongs to the CoaE family.

Its subcellular location is the cytoplasm. The enzyme catalyses 3'-dephospho-CoA + ATP = ADP + CoA + H(+). The protein operates within cofactor biosynthesis; coenzyme A biosynthesis; CoA from (R)-pantothenate: step 5/5. Catalyzes the phosphorylation of the 3'-hydroxyl group of dephosphocoenzyme A to form coenzyme A. The sequence is that of Dephospho-CoA kinase from Streptococcus pyogenes serotype M3 (strain ATCC BAA-595 / MGAS315).